The chain runs to 935 residues: Isoleucine--tRNA ligase (935 aa).

The 'HIGH' region motif lies at 58 to 68 (PYANGSIHVGH). Glu558 contributes to the L-isoleucyl-5'-AMP binding site. The 'KMSKS' region signature appears at 599–603 (KMSKS). Lys602 lines the ATP pocket. Zn(2+) is bound by residues Cys897, Cys900, Cys917, and Cys920.

The protein belongs to the class-I aminoacyl-tRNA synthetase family. IleS type 1 subfamily. In terms of assembly, monomer. The cofactor is Zn(2+).

It is found in the cytoplasm. The enzyme catalyses tRNA(Ile) + L-isoleucine + ATP = L-isoleucyl-tRNA(Ile) + AMP + diphosphate. In terms of biological role, catalyzes the attachment of isoleucine to tRNA(Ile). As IleRS can inadvertently accommodate and process structurally similar amino acids such as valine, to avoid such errors it has two additional distinct tRNA(Ile)-dependent editing activities. One activity is designated as 'pretransfer' editing and involves the hydrolysis of activated Val-AMP. The other activity is designated 'posttransfer' editing and involves deacylation of mischarged Val-tRNA(Ile). In Francisella tularensis subsp. holarctica (strain OSU18), this protein is Isoleucine--tRNA ligase.